A 618-amino-acid polypeptide reads, in one-letter code: Probable arginine--tRNA ligase, cytoplasmic (618 aa).

2 interaction with tRNA regions span residues 60 to 61 (ET) and 104 to 109 (NGIFLR). L-arginine contacts are provided by residues 146–151 (EFSSPN), His-160, Tyr-359, Asp-363, and Gln-387. A 'HIGH' region motif is present at residues 149-160 (SPNIAKPFHAGH). The interaction with tRNA stretch occupies residues 496–510 (DTGPYLQYAHSRLSS).

The protein belongs to the class-I aminoacyl-tRNA synthetase family.

The protein localises to the cytoplasm. The catalysed reaction is tRNA(Arg) + L-arginine + ATP = L-arginyl-tRNA(Arg) + AMP + diphosphate. In terms of biological role, forms part of a macromolecular complex that catalyzes the attachment of specific amino acids to cognate tRNAs during protein synthesis. The sequence is that of Probable arginine--tRNA ligase, cytoplasmic (mrs1) from Schizosaccharomyces pombe (strain 972 / ATCC 24843) (Fission yeast).